A 250-amino-acid chain; its full sequence is 3-deoxy-manno-octulosonate cytidylyltransferase (250 aa).

It belongs to the KdsB family.

It is found in the cytoplasm. It carries out the reaction 3-deoxy-alpha-D-manno-oct-2-ulosonate + CTP = CMP-3-deoxy-beta-D-manno-octulosonate + diphosphate. The protein operates within nucleotide-sugar biosynthesis; CMP-3-deoxy-D-manno-octulosonate biosynthesis; CMP-3-deoxy-D-manno-octulosonate from 3-deoxy-D-manno-octulosonate and CTP: step 1/1. It participates in bacterial outer membrane biogenesis; lipopolysaccharide biosynthesis. Activates KDO (a required 8-carbon sugar) for incorporation into bacterial lipopolysaccharide in Gram-negative bacteria. This chain is 3-deoxy-manno-octulosonate cytidylyltransferase, found in Legionella pneumophila (strain Corby).